A 236-amino-acid polypeptide reads, in one-letter code: Small ribosomal subunit protein uS3 (236 aa).

Residues 39–107 (IREFLTEELK…DTSLNIVEVR (69 aa)) form the KH type-2 domain. The interval 214-236 (ASERRAVEGDNQGSSSNRRRENA) is disordered.

This sequence belongs to the universal ribosomal protein uS3 family. In terms of assembly, part of the 30S ribosomal subunit. Forms a tight complex with proteins S10 and S14.

Its function is as follows. Binds the lower part of the 30S subunit head. Binds mRNA in the 70S ribosome, positioning it for translation. This is Small ribosomal subunit protein uS3 from Brucella canis (strain ATCC 23365 / NCTC 10854 / RM-666).